The sequence spans 596 residues: NADH-quinone oxidoreductase subunit L (596 aa).

14 helical membrane passes run 4–24 (LALI…CFAL), 31–51 (VGII…YLLF), 80–100 (MMSV…FYMA), 104–124 (GFNK…FLVM), 162–182 (AFIM…WLYL), 204–224 (LILI…QFPF), 236–256 (TPVS…YLVI), 270–290 (YIIA…ALVV), 305–325 (LGYM…FHLA), 365–385 (AILM…AGFF), 395–415 (FISF…LTAF), 441–461 (IALL…FFEH), 480–500 (IVMI…IFAY), and 576–596 (NLML…VWMV).

The protein belongs to the complex I subunit 5 family.

It is found in the cell membrane. It carries out the reaction a quinone + NADH + 5 H(+)(in) = a quinol + NAD(+) + 4 H(+)(out). Its function is as follows. NDH-1 shuttles electrons from NADH, via FMN and iron-sulfur (Fe-S) centers, to quinones in the respiratory chain. The immediate electron acceptor for the enzyme in this species is believed to be menaquinone. Couples the redox reaction to proton translocation (for every two electrons transferred, four hydrogen ions are translocated across the cytoplasmic membrane), and thus conserves the redox energy in a proton gradient. The polypeptide is NADH-quinone oxidoreductase subunit L (nuoL) (Campylobacter jejuni subsp. jejuni serotype O:2 (strain ATCC 700819 / NCTC 11168)).